The following is a 440-amino-acid chain: Thymidine phosphorylase (440 aa).

Belongs to the thymidine/pyrimidine-nucleoside phosphorylase family. Homodimer.

The catalysed reaction is thymidine + phosphate = 2-deoxy-alpha-D-ribose 1-phosphate + thymine. It functions in the pathway pyrimidine metabolism; dTMP biosynthesis via salvage pathway; dTMP from thymine: step 1/2. Functionally, the enzymes which catalyze the reversible phosphorolysis of pyrimidine nucleosides are involved in the degradation of these compounds and in their utilization as carbon and energy sources, or in the rescue of pyrimidine bases for nucleotide synthesis. In Shigella dysenteriae serotype 1 (strain Sd197), this protein is Thymidine phosphorylase.